A 185-amino-acid chain; its full sequence is Ribosome-recycling factor (185 aa).

The protein belongs to the RRF family.

It is found in the cytoplasm. Functionally, responsible for the release of ribosomes from messenger RNA at the termination of protein biosynthesis. May increase the efficiency of translation by recycling ribosomes from one round of translation to another. The protein is Ribosome-recycling factor of Streptococcus pneumoniae (strain P1031).